A 357-amino-acid polypeptide reads, in one-letter code: Chorismate synthase (357 aa).

Arginine 47 lines the NADP(+) pocket. FMN is bound by residues 123–125 (RAS), glycine 281, 296–300 (KPTSS), and arginine 324.

The protein belongs to the chorismate synthase family. In terms of assembly, homotetramer. FMNH2 is required as a cofactor.

It carries out the reaction 5-O-(1-carboxyvinyl)-3-phosphoshikimate = chorismate + phosphate. The protein operates within metabolic intermediate biosynthesis; chorismate biosynthesis; chorismate from D-erythrose 4-phosphate and phosphoenolpyruvate: step 7/7. Catalyzes the anti-1,4-elimination of the C-3 phosphate and the C-6 proR hydrogen from 5-enolpyruvylshikimate-3-phosphate (EPSP) to yield chorismate, which is the branch point compound that serves as the starting substrate for the three terminal pathways of aromatic amino acid biosynthesis. This reaction introduces a second double bond into the aromatic ring system. The protein is Chorismate synthase of Chlamydia trachomatis serovar L2 (strain ATCC VR-902B / DSM 19102 / 434/Bu).